A 143-amino-acid polypeptide reads, in one-letter code: Heat shock protein Hsp-16.41 (143 aa).

Residues 35–140 enclose the sHSP domain; that stretch reads HNSFNFSDNI…SSRSIPINFV (106 aa).

Belongs to the small heat shock protein (HSP20) family.

This Caenorhabditis elegans protein is Heat shock protein Hsp-16.41 (hsp-16.41).